The chain runs to 571 residues: Oxysterol-binding protein 11 (571 aa).

The disordered stretch occupies residues 1–73 (MSNFFKKLVK…IGEQIDTLDD (73 aa)). A compositionally biased stretch (polar residues) spans 33 to 42 (NGNQVVPDTA). A compositionally biased stretch (low complexity) spans 43–54 (SSYSDDSNSLSD). Positions 387 to 420 (YLEREENKLANKEKNKIEEREREKRKTRESRKEI) form a coiled coil.

This sequence belongs to the OSBP family.

This chain is Oxysterol-binding protein 11 (osbK), found in Dictyostelium discoideum (Social amoeba).